Reading from the N-terminus, the 207-residue chain is Putative transcriptional regulator (207 aa).

Residues 3–118 (KVLIVDDHPA…ELLLAAKAVL (116 aa)) enclose the Response regulatory domain. Residues Asp-9 and Asp-53 each carry the 4-aspartylphosphate modification. Positions 140-205 (EARMLESLSD…GLIDFARRHE (66 aa)) constitute an HTH luxR-type domain. The segment at residues 155–174 (LQYLANGNTNKAIAQQLFLS) is a DNA-binding region (H-T-H motif).

In terms of biological role, probable transcriptional regulator. This Pseudomonas aeruginosa (strain ATCC 15692 / DSM 22644 / CIP 104116 / JCM 14847 / LMG 12228 / 1C / PRS 101 / PAO1) protein is Putative transcriptional regulator.